The sequence spans 173 residues: Mesencephalic astrocyte-derived neurotrophic factor homolog (173 aa).

Positions 1-22 (MKTWHMVVVIGFLATLAQTSLA) are cleaved as a signal peptide. 4 disulfide bridges follow: Cys-28–Cys-114, Cys-31–Cys-103, Cys-61–Cys-72, and Cys-148–Cys-151.

Belongs to the ARMET family.

It localises to the secreted. Its function is as follows. Required during the maturation of the embryonic nervous system for maintenance of neuronal and cuticular connectivity. Essential for maintenance of dopaminergic neurons and dopamine levels. In Drosophila sechellia (Fruit fly), this protein is Mesencephalic astrocyte-derived neurotrophic factor homolog.